Consider the following 631-residue polypeptide: Chaperone protein HtpG (631 aa).

The interval 1–342 (MSEQTANKET…SNDLPLNVSR (342 aa)) is a; substrate-binding. The interval 343-559 (EILQDNKVTQ…DFEMGTQMAK (217 aa)) is b. Residues 560 to 631 (LLEAAGQAAP…LSAMNQLLAK (72 aa)) are c.

The protein belongs to the heat shock protein 90 family. In terms of assembly, homodimer.

It is found in the cytoplasm. Functionally, molecular chaperone. Has ATPase activity. In Aliivibrio fischeri (strain ATCC 700601 / ES114) (Vibrio fischeri), this protein is Chaperone protein HtpG.